A 92-amino-acid polypeptide reads, in one-letter code: Elongation factor 1-beta (92 aa).

The protein belongs to the EF-1-beta/EF-1-delta family.

Its function is as follows. Promotes the exchange of GDP for GTP in EF-1-alpha/GDP, thus allowing the regeneration of EF-1-alpha/GTP that could then be used to form the ternary complex EF-1-alpha/GTP/AAtRNA. In Pyrobaculum calidifontis (strain DSM 21063 / JCM 11548 / VA1), this protein is Elongation factor 1-beta.